The following is a 474-amino-acid chain: Cysteine--tRNA ligase (474 aa).

Cys-30 serves as a coordination point for Zn(2+). The 'HIGH' region signature appears at 32-42; that stretch reads PTVYNYAHIGN. The Zn(2+) site is built by Cys-215, His-240, and Glu-244. The short motif at 272–276 is the 'KMSKS' region element; it reads KMSKS. Residue Lys-275 participates in ATP binding.

This sequence belongs to the class-I aminoacyl-tRNA synthetase family. As to quaternary structure, monomer. The cofactor is Zn(2+).

It localises to the cytoplasm. The enzyme catalyses tRNA(Cys) + L-cysteine + ATP = L-cysteinyl-tRNA(Cys) + AMP + diphosphate. The protein is Cysteine--tRNA ligase of Brachyspira hyodysenteriae (strain ATCC 49526 / WA1).